The following is a 440-amino-acid chain: Thymidine phosphorylase (440 aa).

This sequence belongs to the thymidine/pyrimidine-nucleoside phosphorylase family. As to quaternary structure, homodimer.

The catalysed reaction is thymidine + phosphate = 2-deoxy-alpha-D-ribose 1-phosphate + thymine. The protein operates within pyrimidine metabolism; dTMP biosynthesis via salvage pathway; dTMP from thymine: step 1/2. Functionally, the enzymes which catalyze the reversible phosphorolysis of pyrimidine nucleosides are involved in the degradation of these compounds and in their utilization as carbon and energy sources, or in the rescue of pyrimidine bases for nucleotide synthesis. This Yersinia enterocolitica serotype O:8 / biotype 1B (strain NCTC 13174 / 8081) protein is Thymidine phosphorylase.